A 166-amino-acid chain; its full sequence is Probable DHNTP pyrophosphohydrolase (166 aa).

Residues 42–166 form the Nudix hydrolase domain; it reads DLQLSASALV…FKKYYRYKNI (125 aa). The Nudix box motif lies at 73–94; the sequence is GHVELKESPLDTAIREFHEETG. Positions 88 and 92 each coordinate Mg(2+).

This sequence belongs to the Nudix hydrolase family. Monomer. It depends on Mg(2+) as a cofactor.

The protein operates within cofactor biosynthesis; tetrahydrofolate biosynthesis; 2-amino-4-hydroxy-6-hydroxymethyl-7,8-dihydropteridine diphosphate from 7,8-dihydroneopterin triphosphate: step 1/4. Functionally, probably mediates the removal of pyrophosphate from dihydroneopterin triphosphate (DHNTP), a possible step in the pterin branch of the folate synthesis pathway. The polypeptide is Probable DHNTP pyrophosphohydrolase (folQ) (Lactococcus lactis subsp. cremoris (strain MG1363)).